Reading from the N-terminus, the 424-residue chain is Serine--tRNA ligase (424 aa).

Position 229–231 (229–231) interacts with L-serine; the sequence is TAE. Residue 260–262 coordinates ATP; sequence RSE. Glu283 is an L-serine binding site. Residue 347–350 coordinates ATP; it reads EISS. Position 383 (Ser383) interacts with L-serine.

It belongs to the class-II aminoacyl-tRNA synthetase family. Type-1 seryl-tRNA synthetase subfamily. As to quaternary structure, homodimer. The tRNA molecule binds across the dimer.

The protein resides in the cytoplasm. The catalysed reaction is tRNA(Ser) + L-serine + ATP = L-seryl-tRNA(Ser) + AMP + diphosphate + H(+). The enzyme catalyses tRNA(Sec) + L-serine + ATP = L-seryl-tRNA(Sec) + AMP + diphosphate + H(+). Its pathway is aminoacyl-tRNA biosynthesis; selenocysteinyl-tRNA(Sec) biosynthesis; L-seryl-tRNA(Sec) from L-serine and tRNA(Sec): step 1/1. Its function is as follows. Catalyzes the attachment of serine to tRNA(Ser). Is also able to aminoacylate tRNA(Sec) with serine, to form the misacylated tRNA L-seryl-tRNA(Sec), which will be further converted into selenocysteinyl-tRNA(Sec). The chain is Serine--tRNA ligase from Gluconacetobacter diazotrophicus (strain ATCC 49037 / DSM 5601 / CCUG 37298 / CIP 103539 / LMG 7603 / PAl5).